Reading from the N-terminus, the 121-residue chain is Large ribosomal subunit protein bL19 (121 aa).

The protein belongs to the bacterial ribosomal protein bL19 family.

In terms of biological role, this protein is located at the 30S-50S ribosomal subunit interface and may play a role in the structure and function of the aminoacyl-tRNA binding site. In Chloroherpeton thalassium (strain ATCC 35110 / GB-78), this protein is Large ribosomal subunit protein bL19.